The chain runs to 413 residues: Serine hydroxymethyltransferase (413 aa).

(6S)-5,6,7,8-tetrahydrofolate contacts are provided by residues leucine 117 and glycine 121–leucine 123. N6-(pyridoxal phosphate)lysine is present on lysine 226. (6S)-5,6,7,8-tetrahydrofolate contacts are provided by residues glutamate 239 and serine 349–phenylalanine 351.

The protein belongs to the SHMT family. As to quaternary structure, homodimer. It depends on pyridoxal 5'-phosphate as a cofactor.

It localises to the cytoplasm. The catalysed reaction is (6R)-5,10-methylene-5,6,7,8-tetrahydrofolate + glycine + H2O = (6S)-5,6,7,8-tetrahydrofolate + L-serine. It functions in the pathway one-carbon metabolism; tetrahydrofolate interconversion. It participates in amino-acid biosynthesis; glycine biosynthesis; glycine from L-serine: step 1/1. Functionally, catalyzes the reversible interconversion of serine and glycine with tetrahydrofolate (THF) serving as the one-carbon carrier. This reaction serves as the major source of one-carbon groups required for the biosynthesis of purines, thymidylate, methionine, and other important biomolecules. Also exhibits THF-independent aldolase activity toward beta-hydroxyamino acids, producing glycine and aldehydes, via a retro-aldol mechanism. This is Serine hydroxymethyltransferase from Bacillus cereus (strain AH187).